Here is a 178-residue protein sequence, read N- to C-terminus: Large ribosomal subunit protein uL30 (178 aa).

Belongs to the universal ribosomal protein uL30 family. Part of the 50S ribosomal subunit.

This chain is Large ribosomal subunit protein uL30, found in Pyrobaculum aerophilum (strain ATCC 51768 / DSM 7523 / JCM 9630 / CIP 104966 / NBRC 100827 / IM2).